The following is a 448-amino-acid chain: MQVPKNNIYTVSRLNGEVRQILEGQLGKVWLNGEISNFSAPSSGHWYLTLKDHYSQIRCAMFKGRNQSVSFKPVNGQQVLVKGAISVYEPRGDYQLLIESMLPAGDGLLAQQFEALKMKLAAQGLFAADTKRQLPKNIQRIGVITSPTGAAIRDVLHVLARRDPSIEVIIYPTQVQGENADMNICQAINIANQRLEVDVLLLTRGGGSLEDLWCFNSEALAHTIYNSALPVVSAVGHEVDTTISDYVADVRAPTPSAGAELLSQDSDNKSQRLATVLSRLKQSASHYQLKQEKRLSLLEHRLQRLDPKRTLQQFEQRFDEMQLRLEAALSNKLHGLSRRQQQLANRLEQQSPKHKLALETNRLSYLATRLQDAMQDTLNQSEQRITYAAHQLETVSPLATLSRGYSITTDANNQVIDNAAQLSVGDKINTRLRHGQVQSTVTQITDES.

The protein belongs to the XseA family. In terms of assembly, heterooligomer composed of large and small subunits.

The protein resides in the cytoplasm. The catalysed reaction is Exonucleolytic cleavage in either 5'- to 3'- or 3'- to 5'-direction to yield nucleoside 5'-phosphates.. In terms of biological role, bidirectionally degrades single-stranded DNA into large acid-insoluble oligonucleotides, which are then degraded further into small acid-soluble oligonucleotides. The protein is Exodeoxyribonuclease 7 large subunit of Shewanella sp. (strain ANA-3).